The chain runs to 278 residues: DNA oxidative demethylase ALKBH2 (278 aa).

The disordered stretch occupies residues 1-49; sequence MDRFLVKGAVGSLKRRMEQEQTGGGPAGLAEEEGNSKKNPRRAAPGNGV. The PCNA-binding motif lies at 3 to 7; the sequence is RFLVK. Substrate is bound by residues 101–103 and 121–123; these read FGK and YTF. The Fe2OG dioxygenase domain occupies 151 to 256; sequence TFNFVLINRY…RVNLTFRKIL (106 aa). 2-oxoglutarate contacts are provided by Asn-158, Tyr-160, and His-170. Residues His-170 and Asp-172 each contribute to the Fe cation site. Asp-173 lines the substrate pocket. Residues His-235, Arg-247, Thr-251, and Arg-253 each contribute to the 2-oxoglutarate site. His-235 serves as a coordination point for Fe cation.

The protein belongs to the alkB family. As to quaternary structure, interacts with PCNA homotrimer; this interaction is enhanced during the S-phase of the cell cycle. Interacts with nucleolar proteins NCL, UBTF and NPM1. Interacts with XRCC5-XRCC6 heterodimer. It depends on Fe(2+) as a cofactor.

The protein resides in the nucleus. It is found in the nucleolus. Its subcellular location is the nucleoplasm. The catalysed reaction is a methylated nucleobase within DNA + 2-oxoglutarate + O2 = a nucleobase within DNA + formaldehyde + succinate + CO2. The enzyme catalyses an N(1)-methyl-2'-deoxyadenosine in double-stranded DNA + 2-oxoglutarate + O2 = a 2'-deoxyadenosine in double-stranded DNA + formaldehyde + succinate + CO2 + H(+). It catalyses the reaction an N(1)-methyl-2'-deoxyadenosine in single-stranded DNA + 2-oxoglutarate + O2 = a 2'-deoxyadenosine in single-stranded DNA + formaldehyde + succinate + CO2 + H(+). It carries out the reaction an N(3)-methyl-2'-deoxycytidine in double-stranded DNA + 2-oxoglutarate + O2 = a 2'-deoxycytidine in double-stranded DNA + formaldehyde + succinate + CO2 + H(+). The catalysed reaction is an N(3)-methyl-2'-deoxycytidine in single-stranded DNA + 2-oxoglutarate + O2 = a 2'-deoxycytidine in single-stranded DNA + formaldehyde + succinate + CO2 + H(+). The enzyme catalyses a 1,N(6)-etheno-2'-deoxyadenosine in double-stranded DNA + 2-oxoglutarate + O2 + H2O = a 2'-deoxyadenosine in double-stranded DNA + glyoxal + succinate + CO2. It catalyses the reaction a 1,N(6)-etheno-2'-deoxyadenosine in single-stranded DNA + 2-oxoglutarate + O2 + H2O = a 2'-deoxyadenosine in single-stranded DNA + glyoxal + succinate + CO2. It carries out the reaction a 3,N(4)-etheno-2'-deoxycytidine in double-stranded DNA + 2-oxoglutarate + O2 + H2O = a 2'-deoxycytidine in double-stranded DNA + glyoxal + succinate + CO2. The catalysed reaction is a 3,N(4)-etheno-2'-deoxycytidine in single-stranded DNA + 2-oxoglutarate + O2 + H2O = a 2'-deoxycytidine in single-stranded DNA + glyoxal + succinate + CO2. The enzyme catalyses a 1,N(2)-etheno-2'-deoxyguanosine in double-stranded DNA + 2-oxoglutarate + O2 + H2O = a 2'-deoxyguanosine in double-stranded DNA + glyoxal + succinate + CO2. Activated by ascorbate and magnesium ions. Its function is as follows. Dioxygenase that repairs alkylated nucleic acid bases by direct reversal oxidative dealkylation. Can process both double-stranded (ds) and single-stranded (ss) DNA substrates, with a strong preference for dsDNA. Uses molecular oxygen, 2-oxoglutarate and iron as cofactors to oxidize the alkyl groups that are subsequently released as aldehydes, regenerating the undamaged bases. Probes the base pair stability, locates a weakened base pair and flips the damaged base to accommodate the lesion in its active site for efficient catalysis. Repairs monoalkylated bases, specifically N1-methyladenine and N3-methylcytosine, as well as higher order alkyl adducts such as bases modified with exocyclic bridged adducts known as etheno adducts including 1,N6-ethenoadenine, 3,N4-ethenocytosine and 1,N2-ethenoguanine. Acts as a gatekeeper of genomic integrity under alkylation stress. Efficiently repairs alkylated lesions in ribosomal DNA (rDNA). These lesions can cause ss- and dsDNA strand breaks that severely impair rDNA transcription. In a response mechanism to DNA damage, associates with PCNA at replication forks to repair alkylated adducts prior to replication. The protein is DNA oxidative demethylase ALKBH2 (ALKBH2) of Bos taurus (Bovine).